The chain runs to 157 residues: 2-C-methyl-D-erythritol 2,4-cyclodiphosphate synthase (157 aa).

A divalent metal cation is bound by residues Asp8, His10, and His42. Residue 8–10 (DVH) coordinates 4-CDP-2-C-methyl-D-erythritol 2-phosphate. Residues 56-58 (DIG), 132-135 (STSE), Phe139, and Arg142 contribute to the 4-CDP-2-C-methyl-D-erythritol 2-phosphate site.

Belongs to the IspF family. Homotrimer. It depends on a divalent metal cation as a cofactor.

It carries out the reaction 4-CDP-2-C-methyl-D-erythritol 2-phosphate = 2-C-methyl-D-erythritol 2,4-cyclic diphosphate + CMP. It participates in isoprenoid biosynthesis; isopentenyl diphosphate biosynthesis via DXP pathway; isopentenyl diphosphate from 1-deoxy-D-xylulose 5-phosphate: step 4/6. In terms of biological role, involved in the biosynthesis of isopentenyl diphosphate (IPP) and dimethylallyl diphosphate (DMAPP), two major building blocks of isoprenoid compounds. Catalyzes the conversion of 4-diphosphocytidyl-2-C-methyl-D-erythritol 2-phosphate (CDP-ME2P) to 2-C-methyl-D-erythritol 2,4-cyclodiphosphate (ME-CPP) with a corresponding release of cytidine 5-monophosphate (CMP). The protein is 2-C-methyl-D-erythritol 2,4-cyclodiphosphate synthase of Dehalococcoides mccartyi (strain ATCC BAA-2266 / KCTC 15142 / 195) (Dehalococcoides ethenogenes (strain 195)).